A 78-amino-acid polypeptide reads, in one-letter code: RNA-binding protein Hfq (78 aa).

Residues 10 to 70 enclose the Sm domain; sequence DLFLNSVRKQ…ISTIMPSQPV (61 aa).

The protein belongs to the Hfq family. Homohexamer.

Functionally, RNA chaperone that binds small regulatory RNA (sRNAs) and mRNAs to facilitate mRNA translational regulation in response to envelope stress, environmental stress and changes in metabolite concentrations. Also binds with high specificity to tRNAs. In Brucella abortus (strain S19), this protein is RNA-binding protein Hfq.